The following is a 526-amino-acid chain: mRNA export factor ICP27 homolog (526 aa).

Zn(2+)-binding residues include Cys-239, His-344, Cys-346, and Cys-351. The CHC2-type zinc finger occupies 239-351 (CVFNDNGHGD…NNHQCDDIGC (113 aa)).

This sequence belongs to the HHV-1 ICP27 protein family.

The protein localises to the virion tegument. The protein resides in the virion. It localises to the host nucleus. Its subcellular location is the host cytoplasm. In terms of biological role, immediate early (EI) protein that plays many roles during productive infection including regulation of viral gene expression and nuclear export of intronless viral RNAs. This Human herpesvirus 7 (strain JI) (HHV-7) protein is mRNA export factor ICP27 homolog.